A 1093-amino-acid chain; its full sequence is Protein translocase subunit SecA (1093 aa).

Residues glutamine 84, 102 to 106 (GEGKT), and aspartate 491 contribute to the ATP site. 2 disordered regions span residues 837 to 869 (QNLQ…SEHE) and 904 to 1062 (SELE…TSEA). Composition is skewed to basic and acidic residues over residues 904-937 (SELE…DATK), 944-971 (EELK…EKLK), and 978-1062 (PKDL…TSEA).

It belongs to the SecA family. Monomer and homodimer. Part of the essential Sec protein translocation apparatus which comprises SecA, SecYEG and auxiliary proteins SecDF. Other proteins may also be involved.

It localises to the cell membrane. It is found in the cytoplasm. It carries out the reaction ATP + H2O + cellular proteinSide 1 = ADP + phosphate + cellular proteinSide 2.. Part of the Sec protein translocase complex. Interacts with the SecYEG preprotein conducting channel. Has a central role in coupling the hydrolysis of ATP to the transfer of proteins into and across the cell membrane, serving as an ATP-driven molecular motor driving the stepwise translocation of polypeptide chains across the membrane. In Mycoplasmopsis synoviae (strain 53) (Mycoplasma synoviae), this protein is Protein translocase subunit SecA.